The chain runs to 399 residues: Transaminase BacF (399 aa).

Pyridoxal 5'-phosphate is bound by residues 103 to 104, Y128, N178, Y209, and 236 to 238; these read GK and SFS. The residue at position 239 (K239) is an N6-(pyridoxal phosphate)lysine. Residue R247 coordinates pyridoxal 5'-phosphate.

The protein belongs to the class-I pyridoxal-phosphate-dependent aminotransferase family. As to quaternary structure, homodimer. The cofactor is pyridoxal 5'-phosphate.

It is found in the cytoplasm. It functions in the pathway antibiotic biosynthesis; bacilysin biosynthesis. Functionally, part of the bacABCDEF operon responsible for the biosynthesis of the nonribosomally synthesized dipeptide antibiotic bacilysin, composed of L-alanine and L-anticapsin. Bacilysin is an irreversible inactivator of the glutaminase domain of glucosamine synthetase. Catalyzes the reductive amination of the C2 ketone of tetrahydro-hydroxyphenylpyruvate (H4HPP), with L-Phe as an amino donor, to yield tetrahydrotyrosine (H4Tyr) diastereomer. D-Phe is not an effective amino donor. BacF associated to BacG converts 3E,7R- and 3Z,7R-ex-H2HPP to 2S,4R,7R- and 2S,4S,7R-H4Tyr, respectively. Given that bacilysin has the 2S,4S stereochemistry in its anticapsin moiety, it is likely that the 2S,4S-H4Tyr is the diastereomer used for the biosynthesis. The sequence is that of Transaminase BacF from Bacillus subtilis (strain 168).